Reading from the N-terminus, the 256-residue chain is Imidazole glycerol phosphate synthase subunit hisF1 (256 aa).

Active-site residues include Asp-12 and Asp-131.

This sequence belongs to the HisA/HisF family. As to quaternary structure, heterodimer of HisH and HisF.

Its subcellular location is the cytoplasm. The enzyme catalyses 5-[(5-phospho-1-deoxy-D-ribulos-1-ylimino)methylamino]-1-(5-phospho-beta-D-ribosyl)imidazole-4-carboxamide + L-glutamine = D-erythro-1-(imidazol-4-yl)glycerol 3-phosphate + 5-amino-1-(5-phospho-beta-D-ribosyl)imidazole-4-carboxamide + L-glutamate + H(+). It functions in the pathway amino-acid biosynthesis; L-histidine biosynthesis; L-histidine from 5-phospho-alpha-D-ribose 1-diphosphate: step 5/9. In terms of biological role, IGPS catalyzes the conversion of PRFAR and glutamine to IGP, AICAR and glutamate. The HisF subunit catalyzes the cyclization activity that produces IGP and AICAR from PRFAR using the ammonia provided by the HisH subunit. The protein is Imidazole glycerol phosphate synthase subunit hisF1 (hisF1) of Pseudomonas aeruginosa (strain ATCC 15692 / DSM 22644 / CIP 104116 / JCM 14847 / LMG 12228 / 1C / PRS 101 / PAO1).